A 333-amino-acid chain; its full sequence is Eukaryotic translation initiation factor 3 subunit I (333 aa).

WD repeat units follow at residues 8–47 (GHER…RLGT), 50–91 (GHTG…ALLK), 144–183 (CNDS…VLVN), and 186–225 (EHSR…HQKT). T219 carries the post-translational modification Phosphothreonine. N6-acetyllysine is present on K264. K282 is covalently cross-linked (Glycyl lysine isopeptide (Lys-Gly) (interchain with G-Cter in ubiquitin)). The stretch at 283–324 (GHFGPINSVAFHPDGKSYSSGGEDGYVRIHYFDPQYFEFEFE) is one WD 5 repeat. Y308 bears the Phosphotyrosine mark.

This sequence belongs to the eIF-3 subunit I family. As to quaternary structure, component of the eukaryotic translation initiation factor 3 (eIF-3) complex, which is composed of 13 subunits: EIF3A, EIF3B, EIF3C, EIF3D, EIF3E, EIF3F, EIF3G, EIF3H, EIF3I, EIF3J, EIF3K, EIF3L and EIF3M. The eIF-3 complex appears to include 3 stable modules: module A is composed of EIF3A, EIF3B, EIF3G and EIF3I; module B is composed of EIF3F, EIF3H, and EIF3M; and module C is composed of EIF3C, EIF3D, EIF3E, EIF3K and EIF3L. EIF3C of module C binds EIF3B of module A and EIF3H of module B, thereby linking the three modules. EIF3J is a labile subunit that binds to the eIF-3 complex via EIF3B. The eIF-3 complex interacts with RPS6KB1 under conditions of nutrient depletion. Mitogenic stimulation leads to binding and activation of a complex composed of MTOR and RPTOR, leading to phosphorylation and release of RPS6KB1 and binding of EIF4B to eIF-3. Post-translationally, phosphorylated by TGF-beta type II receptor.

It is found in the cytoplasm. Component of the eukaryotic translation initiation factor 3 (eIF-3) complex, which is required for several steps in the initiation of protein synthesis. The eIF-3 complex associates with the 40S ribosome and facilitates the recruitment of eIF-1, eIF-1A, eIF-2:GTP:methionyl-tRNAi and eIF-5 to form the 43S pre-initiation complex (43S PIC). The eIF-3 complex stimulates mRNA recruitment to the 43S PIC and scanning of the mRNA for AUG recognition. The eIF-3 complex is also required for disassembly and recycling of post-termination ribosomal complexes and subsequently prevents premature joining of the 40S and 60S ribosomal subunits prior to initiation. The eIF-3 complex specifically targets and initiates translation of a subset of mRNAs involved in cell proliferation, including cell cycling, differentiation and apoptosis, and uses different modes of RNA stem-loop binding to exert either translational activation or repression. The protein is Eukaryotic translation initiation factor 3 subunit I of Oryctolagus cuniculus (Rabbit).